The following is a 1847-amino-acid chain: Peripheral-type benzodiazepine receptor-associated protein 1 (1847 aa).

Disordered stretches follow at residues 57–81, 282–318, and 560–626; these read EESS…GTET, NQRE…EDDV, and SGPK…DTAS. 2 stretches are compositionally biased toward low complexity: residues 294-310 and 600-613; these read GSTA…GAPG and SLSN…IHNS. One can recognise an SH3 1 domain in the interval 651 to 718; that stretch reads ARIQVFLARY…PSNFVERVSD (68 aa). The segment at 728-787 is disordered; the sequence is ELADSSHSSGPELSFLSGGGGGCSSGGQSSGGRSQPRPEEEATGDELSLSPPPEGLGEPL. Over residues 744-757 the composition is skewed to gly residues; that stretch reads SGGGGGCSSGGQSS. Fibronectin type-III domains follow at residues 789–880, 882–974, and 979–1077; these read VPYP…AGAG, VPSQ…TLPA, and APLD…PALA. Disordered stretches follow at residues 1107-1174, 1191-1215, 1240-1307, 1322-1478, and 1514-1616; these read LGYT…EGPD, DAGP…VCHR, NSLV…ILEQ, FSIP…ESSL, and PTDG…SHQD. Residues 1122–1133 show a composition bias toward polar residues; the sequence is TQDSPASLSTEM. The span at 1203–1215 shows a compositional bias: basic and acidic residues; the sequence is LTQKEPSTEVCHR. Acidic residues predominate over residues 1253–1266; sequence DIQEEEEEEEEEEE. The segment covering 1272–1284 has biased composition (polar residues); sequence WSFQKQVAGNSIG. Acidic residues-rich tracts occupy residues 1296-1305 and 1325-1335; these read CETDSDEEIL and PEEEEEEDEEE. Residues 1340 to 1352 are compositionally biased toward low complexity; it reads PGPSSSSQDPSQP. 2 stretches are compositionally biased toward basic and acidic residues: residues 1412–1421 and 1546–1578; these read RPQDPREHCS and AWEK…ESRG. In terms of domain architecture, SH3 2 spans 1617–1685; the sequence is LPLRVFVALF…PCNMVAEVAV (69 aa). Disordered stretches follow at residues 1701-1747 and 1818-1847; these read PPNV…PGPP and LEGP…RVQC. Positions 1756-1823 constitute an SH3 3 domain; sequence KTSRPMVAAF…PSNFLEGPGP (68 aa).

Belongs to the RIMBP family. Interacts with RIMS1 and RIMS2. Interacts with TSPO. Interacts with CACNA1A. As to expression, specifically expressed in brain. High expression level in the limbic system such as the nucleus accumbens, septum, and hippocampus, as well as on the cerebellum and pineal gland. Abundant in the CA1 region of the hippocampus.

The protein localises to the cytoplasm. It is found in the mitochondrion. In terms of biological role, required for synaptic transmission regulation. It probably controls the recruitement of voltage-gated calcium channels to the presynaptic membrane, and modulates neurotransmitter release. The chain is Peripheral-type benzodiazepine receptor-associated protein 1 from Rattus norvegicus (Rat).